Reading from the N-terminus, the 598-residue chain is Aspartate--tRNA(Asp/Asn) ligase (598 aa).

E172 contributes to the L-aspartate binding site. Residues 196–199 are aspartate; the sequence is QLFK. An L-aspartate-binding site is contributed by R218. ATP-binding positions include 218–220 and Q227; that span reads RDE. H454 provides a ligand contact to L-aspartate. Residue E488 participates in ATP binding. R495 provides a ligand contact to L-aspartate. 540–543 provides a ligand contact to ATP; it reads GLDR.

This sequence belongs to the class-II aminoacyl-tRNA synthetase family. Type 1 subfamily. Homodimer.

The protein localises to the cytoplasm. The catalysed reaction is tRNA(Asx) + L-aspartate + ATP = L-aspartyl-tRNA(Asx) + AMP + diphosphate. Aspartyl-tRNA synthetase with relaxed tRNA specificity since it is able to aspartylate not only its cognate tRNA(Asp) but also tRNA(Asn). Reaction proceeds in two steps: L-aspartate is first activated by ATP to form Asp-AMP and then transferred to the acceptor end of tRNA(Asp/Asn). This chain is Aspartate--tRNA(Asp/Asn) ligase, found in Leptothrix cholodnii (strain ATCC 51168 / LMG 8142 / SP-6) (Leptothrix discophora (strain SP-6)).